The primary structure comprises 865 residues: MIKAIIGKIIGTRNDRWIKQYKKQVLTINALEPTYEKMSDVELQNAFEELKKRVRSTEKDLQEKTLLEVLPESFAITREASKRILKMRHFDVQLIGGMVLNDGKIAEMKTGEGKTLVATLAVALNALKGESVYVVTVNDYLAHRDSKEMEPLYHFLGYSVGTITASVRDDDERLEIYSKDIVYGTNNEFGFDYLRDNMKYSLEHKVQKSHAFAIVDEVDSILIDEARTPLIISGPVDRRMENYNKADEVAKSMQVEIDFTIDEKNRAILITEEGIKKAENLFGVDNLYKIENAALSHHLDQALKANYLFFIDKDYIVANNEVVIVDEFTGRLSEGRRFSEGLHQALEAKEGVSIKEESQTLADITFQNYFRMFSKLAGMTGTAQTEATEFLEIYNLEVVSIPTNLAIKRKDLNDLIYKSEKEKFDAVILKIKELHDKGQPVLVGTASIEKSETLHALLKKERIPHTVLNAKQHTKEAEIIKDAGLKGAVTIATNMAGRGVDIKLTDEIKELGGLYIIGTERHESRRIDNQLRGRSGRQGDPGTSQFYLSLEDNLLRIFGSDRIKGVMEKLGLKDGEHIESKLVTRAVENAQKKVENLHFESRKHLLEYDDVANEQRKSVYKFRDELLDASYDIGAKIAENREYALNQIFSKLKAFDHQNLSEEELLGLKNVLKEDFNAHVALEDLEKASPIEKFVAEKLKSDYENKMKVLDSEQRSRIERIVYLQILDNAWREHLYTMDNLKTGINLRGYNQKDPLVEYKKESYNLFLEFIEDIKIEAIKTFSKIQFENEQDSSDAERYLDNFSEEREHESVTYRHEETLDEDLNVAMKAFAKTPKRNEPCPCQSGKKYKDCCAKSGPKKGLFAK.

Residues glutamine 93, 111-115, and aspartate 501 each bind ATP; that span reads GEGKT. Zn(2+) is bound by residues cysteine 841, cysteine 843, cysteine 852, and cysteine 853.

The protein belongs to the SecA family. In terms of assembly, monomer and homodimer. Part of the essential Sec protein translocation apparatus which comprises SecA, SecYEG and auxiliary proteins SecDF-YajC and YidC. The cofactor is Zn(2+).

The protein resides in the cell inner membrane. Its subcellular location is the cytoplasm. The enzyme catalyses ATP + H2O + cellular proteinSide 1 = ADP + phosphate + cellular proteinSide 2.. Part of the Sec protein translocase complex. Interacts with the SecYEG preprotein conducting channel. Has a central role in coupling the hydrolysis of ATP to the transfer of proteins into and across the cell membrane, serving as an ATP-driven molecular motor driving the stepwise translocation of polypeptide chains across the membrane. The polypeptide is Protein translocase subunit SecA (Helicobacter pylori (strain P12)).